Reading from the N-terminus, the 441-residue chain is Cobyrinate a,c-diamide synthase (441 aa).

The 192-residue stretch at 243–434 folds into the GATase cobBQ-type domain; sequence TVAVADDAAF…AHVHPESTAF (192 aa). Cys323 serves as the catalytic Nucleophile.

It belongs to the CobB/CbiA family. It depends on Mg(2+) as a cofactor.

The catalysed reaction is cob(II)yrinate + 2 L-glutamine + 2 ATP + 2 H2O = cob(II)yrinate a,c diamide + 2 L-glutamate + 2 ADP + 2 phosphate + 2 H(+). It participates in cofactor biosynthesis; adenosylcobalamin biosynthesis; cob(II)yrinate a,c-diamide from sirohydrochlorin (anaerobic route): step 10/10. Functionally, catalyzes the ATP-dependent amidation of the two carboxylate groups at positions a and c of cobyrinate, using either L-glutamine or ammonia as the nitrogen source. The polypeptide is Cobyrinate a,c-diamide synthase (Halobacterium salinarum (strain ATCC 700922 / JCM 11081 / NRC-1) (Halobacterium halobium)).